The primary structure comprises 37 residues: Large ribosomal subunit protein bL36 (37 aa).

This sequence belongs to the bacterial ribosomal protein bL36 family.

This is Large ribosomal subunit protein bL36 from Sulfurihydrogenibium sp. (strain YO3AOP1).